A 147-amino-acid polypeptide reads, in one-letter code: MAGKKAPNGLFAARKLRRKRLKFRWSQREFKIKMLGLKKKHDPLEGAPMARGIVLEKVGVEARQPNSAVRKCVRVQLAKNGKVVTAFVPFDGGINYIDEHDEVIIEGIGGPRGRSMGDIPGVRYKVIMVNGVSLKALYLGKKQKPVR.

Belongs to the universal ribosomal protein uS12 family. As to quaternary structure, part of the 30S ribosomal subunit.

With S4 and S5 plays an important role in translational accuracy. Located at the interface of the 30S and 50S subunits. This Staphylothermus marinus (strain ATCC 43588 / DSM 3639 / JCM 9404 / F1) protein is Small ribosomal subunit protein uS12.